Reading from the N-terminus, the 188-residue chain is MVKIAIFASGSGSNFENIVEHVESGKLENIEVTALYTDHQNAFCIDRAKKHDIPVYINEPKQFGSKAAYEQHLVTLLNEDKVEWIILAGYMRLIGPDLLASFEGKILNIHPSLLPKYKGIDAIGQAYHSGDTITGSTVHYVDSGMDTGEIIEQRQCDIRPDDSKEQLEEKVKKLEYELYPSVIAKIVK.

12–14 provides a ligand contact to N(1)-(5-phospho-beta-D-ribosyl)glycinamide; the sequence is GSN. (6R)-10-formyltetrahydrofolate is bound by residues Lys66, 91–94, and Asn108; that span reads MRLI. The Proton donor role is filled by His110.

This sequence belongs to the GART family.

The enzyme catalyses N(1)-(5-phospho-beta-D-ribosyl)glycinamide + (6R)-10-formyltetrahydrofolate = N(2)-formyl-N(1)-(5-phospho-beta-D-ribosyl)glycinamide + (6S)-5,6,7,8-tetrahydrofolate + H(+). The protein operates within purine metabolism; IMP biosynthesis via de novo pathway; N(2)-formyl-N(1)-(5-phospho-D-ribosyl)glycinamide from N(1)-(5-phospho-D-ribosyl)glycinamide (10-formyl THF route): step 1/1. In terms of biological role, catalyzes the transfer of a formyl group from 10-formyltetrahydrofolate to 5-phospho-ribosyl-glycinamide (GAR), producing 5-phospho-ribosyl-N-formylglycinamide (FGAR) and tetrahydrofolate. The protein is Phosphoribosylglycinamide formyltransferase of Staphylococcus aureus (strain MRSA252).